The sequence spans 373 residues: Lipoyl synthase (373 aa).

The disordered stretch occupies residues 12-36 (HVVSNDHPSSSPLQPGVKQSGEDKI). The [4Fe-4S] cluster site is built by Cys-81, Cys-86, Cys-92, Cys-107, Cys-111, Cys-114, and Ser-323. Residues 93–312 (FSHGTATFMI…EEYGMALGFS (220 aa)) form the Radical SAM core domain. Residues 346-373 (PAVSSTEHRERHTIASKSASKTESIPHR) are disordered. The segment covering 360–373 (ASKSASKTESIPHR) has biased composition (polar residues).

It belongs to the radical SAM superfamily. Lipoyl synthase family. [4Fe-4S] cluster serves as cofactor.

It localises to the cytoplasm. The catalysed reaction is [[Fe-S] cluster scaffold protein carrying a second [4Fe-4S](2+) cluster] + N(6)-octanoyl-L-lysyl-[protein] + 2 oxidized [2Fe-2S]-[ferredoxin] + 2 S-adenosyl-L-methionine + 4 H(+) = [[Fe-S] cluster scaffold protein] + N(6)-[(R)-dihydrolipoyl]-L-lysyl-[protein] + 4 Fe(3+) + 2 hydrogen sulfide + 2 5'-deoxyadenosine + 2 L-methionine + 2 reduced [2Fe-2S]-[ferredoxin]. It functions in the pathway protein modification; protein lipoylation via endogenous pathway; protein N(6)-(lipoyl)lysine from octanoyl-[acyl-carrier-protein]: step 2/2. Functionally, catalyzes the radical-mediated insertion of two sulfur atoms into the C-6 and C-8 positions of the octanoyl moiety bound to the lipoyl domains of lipoate-dependent enzymes, thereby converting the octanoylated domains into lipoylated derivatives. This Xylella fastidiosa (strain M12) protein is Lipoyl synthase.